We begin with the raw amino-acid sequence, 293 residues long: DNA-directed RNA polymerase III subunit RPC6 (293 aa).

It belongs to the eukaryotic RPC34/RPC39 RNA polymerase subunit family. Component of the RNA polymerase III (Pol III) complex consisting of 17 subunits.

It localises to the nucleus. In terms of biological role, DNA-dependent RNA polymerase catalyzes the transcription of DNA into RNA using the four ribonucleoside triphosphates as substrates. Specific peripheric component of RNA polymerase III which synthesizes small RNAs, such as 5S rRNA and tRNAs. This Drosophila melanogaster (Fruit fly) protein is DNA-directed RNA polymerase III subunit RPC6.